The following is a 215-amino-acid chain: MSEHETTGEGRFSSIEIRVLGSLIEKQATSPETYPLTLNALVLACNQKTSREPVMNLSPGQVGQALRALEGQEMARLQMGSRADRWEQRVDKALELVPAQLVLMGLMFLRGPQTLNELLTRSNRLHDFEDVDQVQHQLERLISRGLALHLPRQAGQREDRYTHALGDPAQIEEILAARQQEGGGRSAGGSVSEERIEALEARIAALEARLAQLEG.

This sequence belongs to the UPF0502 family.

This is UPF0502 protein PSEEN2299 from Pseudomonas entomophila (strain L48).